Consider the following 66-residue polypeptide: Putative ankyrin repeat protein RF_pd14 (66 aa).

The stretch at 14 to 66 (KLNQKLMRAAATGDIEAVQKLVLRGADIYCRDHQGDTALSLAAGSGYLDILDI) is one ANK repeat.

The sequence is that of Putative ankyrin repeat protein RF_pd14 from Rickettsia felis (strain ATCC VR-1525 / URRWXCal2) (Rickettsia azadi).